The primary structure comprises 87 residues: Large ribosomal subunit protein bL31B (87 aa).

It belongs to the bacterial ribosomal protein bL31 family. Type B subfamily. Part of the 50S ribosomal subunit.

The polypeptide is Large ribosomal subunit protein bL31B (Klebsiella pneumoniae (strain 342)).